We begin with the raw amino-acid sequence, 367 residues long: Peptide chain release factor 2 (367 aa).

At Q254 the chain carries N5-methylglutamine.

This sequence belongs to the prokaryotic/mitochondrial release factor family. In terms of processing, methylated by PrmC. Methylation increases the termination efficiency of RF2.

It localises to the cytoplasm. In terms of biological role, peptide chain release factor 2 directs the termination of translation in response to the peptide chain termination codons UGA and UAA. This is Peptide chain release factor 2 from Janthinobacterium sp. (strain Marseille) (Minibacterium massiliensis).